Here is a 133-residue protein sequence, read N- to C-terminus: Profilin-2 (133 aa).

The protein belongs to the profilin family. In terms of assembly, occurs in many kinds of cells as a complex with monomeric actin in a 1:1 ratio.

Its subcellular location is the cytoplasm. The protein resides in the cytoskeleton. Its function is as follows. Binds to actin and affects the structure of the cytoskeleton. At high concentrations, profilin prevents the polymerization of actin, whereas it enhances it at low concentrations. By binding to PIP2, it inhibits the formation of IP3 and DG. This Artemisia vulgaris (Mugwort) protein is Profilin-2.